We begin with the raw amino-acid sequence, 57 residues long: Large ribosomal subunit protein bL32 (57 aa).

Belongs to the bacterial ribosomal protein bL32 family.

The sequence is that of Large ribosomal subunit protein bL32 from Streptomyces avermitilis (strain ATCC 31267 / DSM 46492 / JCM 5070 / NBRC 14893 / NCIMB 12804 / NRRL 8165 / MA-4680).